We begin with the raw amino-acid sequence, 258 residues long: NAD kinase (258 aa).

Asp45 serves as the catalytic Proton acceptor. Residues 45–46, 117–118, Asp147, Ala155, 158–163, and Ala182 each bind NAD(+); these read DG, NE, and TAYNYS.

The protein belongs to the NAD kinase family. Requires a divalent metal cation as cofactor.

The protein localises to the cytoplasm. It catalyses the reaction NAD(+) + ATP = ADP + NADP(+) + H(+). Functionally, involved in the regulation of the intracellular balance of NAD and NADP, and is a key enzyme in the biosynthesis of NADP. Catalyzes specifically the phosphorylation on 2'-hydroxyl of the adenosine moiety of NAD to yield NADP. The chain is NAD kinase from Xanthomonas campestris pv. campestris (strain 8004).